Consider the following 165-residue polypeptide: NADPH-dependent 7-cyano-7-deazaguanine reductase (165 aa).

Residue C56 is the Thioimide intermediate of the active site. The active-site Proton donor is D63. Substrate contacts are provided by residues 78–80 (VES) and 97–98 (HE).

This sequence belongs to the GTP cyclohydrolase I family. QueF type 1 subfamily.

It localises to the cytoplasm. It carries out the reaction 7-aminomethyl-7-carbaguanine + 2 NADP(+) = 7-cyano-7-deazaguanine + 2 NADPH + 3 H(+). It participates in tRNA modification; tRNA-queuosine biosynthesis. In terms of biological role, catalyzes the NADPH-dependent reduction of 7-cyano-7-deazaguanine (preQ0) to 7-aminomethyl-7-deazaguanine (preQ1). The chain is NADPH-dependent 7-cyano-7-deazaguanine reductase from Oceanobacillus iheyensis (strain DSM 14371 / CIP 107618 / JCM 11309 / KCTC 3954 / HTE831).